The chain runs to 2548 residues: Variant-silencing SET domain-containing protein (2548 aa).

Residues I37 to N48 are compositionally biased toward acidic residues. Disordered regions lie at residues I37–N61, G336–N379, and S585–T629. A compositionally biased stretch (basic and acidic residues) spans G336–D357. The span at G358 to D378 shows a compositional bias: acidic residues. Positions N602–N616 are enriched in low complexity. Residues I617–T629 show a composition bias toward polar residues. Residues F787–D846 form a PHD-type 1 zinc finger. Positions I929–R944 are enriched in basic residues. Disordered stretches follow at residues I929–N1054, E1546–D1575, E1713–K1732, and I1772–R1822. Acidic residues predominate over residues D986–N1016. 2 stretches are compositionally biased toward low complexity: residues N1017–N1050 and N1551–N1572. Over residues Q1714 to K1732 the composition is skewed to polar residues. The AWS domain maps to S2067–F2117. An SET domain is found at K2119–S2240. Y2239 is an S-adenosyl-L-methionine binding site. The segment at D2423–Y2471 adopts a PHD-type 2 zinc-finger fold.

This sequence belongs to the class V-like SAM-binding methyltransferase superfamily.

The protein localises to the nucleus. The protein resides in the chromosome. It catalyses the reaction L-lysyl(36)-[histone H3] + 3 S-adenosyl-L-methionine = N(6),N(6),N(6)-trimethyl-L-lysyl(36)-[histone H3] + 3 S-adenosyl-L-homocysteine + 3 H(+). Its function is as follows. Histone methyltransferase that specifically represses expression of the surface antigen-coding var genes by mediating trimethylation of 'Lys-36' of histone H3 (H3K36me3) on var genes. SETVS-dependent H3K36me3 is specifically involved in var genes silencing, a central step malaria pathogenesis: each parasite contains 60 distinct var genes that each code for a different PfEMP1 protein. During infection, the clonal parasite population expresses only 1 gene at a time, while the 59 other var genes are silenced. The parasite then switches to the expression of a new variant antigen as an immune-evasion mechanism to avoid the host antibody response. Represses expression of both var mRNA and antisense long non-coding RNA. This is Variant-silencing SET domain-containing protein (SETVS) from Plasmodium falciparum (isolate 3D7).